Here is a 592-residue protein sequence, read N- to C-terminus: MSVSLVVIRLELAEHSPVPAGFGFSAAAGEMSDEEIKKTTLASAVACLEGKSPGEKVAIIHQHLGRREMTDVIIETMKSNPDELKTTVEERKSSEASPTAQRSKDHSKECINAAPDSPSKQLPDQISFFSGNPSVEIVHGIMHLYKTNKMTSLKEDVRRSAMLCILTVPAAMTSHDLMKFVAPFNEVIEQMKIIRDSTPNQYMVLIKFRAQADADSFYMTCNGRQFNSIEDDVCQLVYVERAEVLKSEDGASLPVMDLTELPKCTVCLERMDESVNGILTTLCNHSFHSQCLQRWDDTTCPVCRYCQTPEPVEENKCFECGVQENLWICLICGHIGCGRYVSRHAYKHFEETQHTYAMQLTNHRVWDYAGDNYVHRLVASKTDGKIVQYECEGDTCQEEKIDALQLEYSYLLTSQLESQRIYWENKIVRIEKDTAEEINNMKTKFKETIEKCDNLEHKLNDLLKEKQSVERKCTQLNTKVAKLTNELKEEQEMNKCLRANQVLLQNKLKEEERVLKETCDQKDLQITEIQEQLRDVMFYLETQQKINHLPAETRQEIQEGQINIAMASASSPASSGGSGKLPSRKGRSKRGK.

Position 52 is a phosphoserine (Ser-52). The segment at 78–124 is disordered; the sequence is KSNPDELKTTVEERKSSEASPTAQRSKDHSKECINAAPDSPSKQLPD. Residues 80-94 are compositionally biased toward basic and acidic residues; sequence NPDELKTTVEERKSS. Phosphoserine occurs at positions 97, 117, and 119. The RING-type zinc finger occupies 264–304; it reads CTVCLERMDESVNGILTTLCNHSFHSQCLQRWDDTTCPVCR. The UBP-type; degenerate zinc finger occupies 301–393; it reads PVCRYCQTPE…GKIVQYECEG (93 aa). Residues Cys-317, Cys-320, Cys-329, Cys-332, Cys-337, His-344, His-348, and His-354 each coordinate Zn(2+). Residues 429 to 537 adopt a coiled-coil conformation; the sequence is RIEKDTAEEI…EIQEQLRDVM (109 aa). The tract at residues 565–592 is disordered; it reads AMASASSPASSGGSGKLPSRKGRSKRGK. Residues 582-592 are compositionally biased toward basic residues; that stretch reads PSRKGRSKRGK.

Interacts with the nuclear localization signal of BRCA1 and with the N-terminal of KSR1. The C-terminal portion of BCRA1 interacts with DDB1. As to expression, expressed in breast epithelial cell lines.

The protein localises to the cytoplasm. It carries out the reaction S-ubiquitinyl-[E2 ubiquitin-conjugating enzyme]-L-cysteine + [acceptor protein]-L-lysine = [E2 ubiquitin-conjugating enzyme]-L-cysteine + N(6)-ubiquitinyl-[acceptor protein]-L-lysine.. Its pathway is protein modification; protein ubiquitination. Its function is as follows. Negatively regulates MAP kinase activation by limiting the formation of Raf/MEK complexes probably by inactivation of the KSR1 scaffold protein. Also acts as a Ras responsive E3 ubiquitin ligase that, on activation of Ras, is modified by auto-polyubiquitination resulting in the release of inhibition of Raf/MEK complex formation. May also act as a cytoplasmic retention protein with a role in regulating nuclear transport. The polypeptide is BRCA1-associated protein (Homo sapiens (Human)).